A 42-amino-acid polypeptide reads, in one-letter code: Protein Tat (42 aa).

Residues 1–24 (MEPVDPNLEPWNHPGSQPKTACNQ) are interaction with human CREBBP. Positions 22 to 37 (CNQCYCKKCSYHCLVC) are cysteine-rich. At lysine 28 the chain carries N6-acetyllysine; by host PCAF.

It belongs to the lentiviruses Tat family. Interacts with host CCNT1. Associates with the P-TEFb complex composed at least of Tat, P-TEFb (CDK9 and CCNT1), TAR RNA, RNA Pol II. Recruits the HATs CREBBP, TAF1/TFIID, EP300, PCAF and GCN5L2. Interacts with host KAT5/Tip60; this interaction targets the latter to degradation. Interacts with the host deacetylase SIRT1. Interacts with host capping enzyme RNGTT; this interaction stimulates RNGTT. Binds to host KDR, and to the host integrins ITGAV/ITGB3 and ITGA5/ITGB1. Interacts with host KPNB1/importin beta-1 without previous binding to KPNA1/importin alpha-1. Interacts with EIF2AK2. Interacts with host nucleosome assembly protein NAP1L1; this interaction may be required for the transport of Tat within the nucleus, since the two proteins interact at the nuclear rim. Interacts with host C1QBP/SF2P32; this interaction involves lysine-acetylated Tat. Interacts with the host chemokine receptors CCR2, CCR3 and CXCR4. Interacts with host DPP4/CD26; this interaction may trigger an anti-proliferative effect. Interacts with host LDLR. Interacts with the host extracellular matrix metalloproteinase MMP1. Interacts with host PRMT6; this interaction mediates Tat's methylation. Interacts with, and is ubiquitinated by MDM2/Hdm2. Interacts with host PSMC3 and HTATIP2. Interacts with STAB1; this interaction may overcome SATB1-mediated repression of IL2 and IL2RA (interleukin) in T cells by binding to the same domain than HDAC1. Interacts (when acetylated) with human CDK13, thereby increasing HIV-1 mRNA splicing and promoting the production of the doubly spliced HIV-1 protein Nef. Interacts with host TBP; this interaction modulates the activity of transcriptional pre-initiation complex. Interacts with host RELA. Interacts with host PLSCR1; this interaction negatively regulates Tat transactivation activity by altering its subcellular distribution. Post-translationally, phosphorylated by EIF2AK2 on serine and threonine residues adjacent to the basic region important for TAR RNA binding and function. Phosphorylation of Tat by EIF2AK2 is dependent on the prior activation of EIF2AK2 by dsRNA. In terms of processing, asymmetrical arginine methylation by host PRMT6 seems to diminish the transactivation capacity of Tat and affects the interaction with host CCNT1. Polyubiquitination by host MDM2 does not target Tat to degradation, but activates its transactivation function and fosters interaction with CCNT1 and TAR RNA.

It is found in the host nucleus. It localises to the host nucleolus. The protein resides in the host cytoplasm. The protein localises to the secreted. In terms of biological role, transcriptional activator that increases RNA Pol II processivity, thereby increasing the level of full-length viral transcripts. Recognizes a hairpin structure at the 5'-LTR of the nascent viral mRNAs referred to as the transactivation responsive RNA element (TAR) and recruits the cyclin T1-CDK9 complex (P-TEFb complex) that will in turn hyperphosphorylate the RNA polymerase II to allow efficient elongation. The CDK9 component of P-TEFb and other Tat-activated kinases hyperphosphorylate the C-terminus of RNA Pol II that becomes stabilized and much more processive. Other factors such as HTATSF1/Tat-SF1, SUPT5H/SPT5, and HTATIP2 are also important for Tat's function. Besides its effect on RNA Pol II processivity, Tat induces chromatin remodeling of proviral genes by recruiting the histone acetyltransferases (HATs) CREBBP, EP300 and PCAF to the chromatin. This also contributes to the increase in proviral transcription rate, especially when the provirus integrates in transcriptionally silent region of the host genome. To ensure maximal activation of the LTR, Tat mediates nuclear translocation of NF-kappa-B by interacting with host RELA. Through its interaction with host TBP, Tat may also modulate transcription initiation. Tat can reactivate a latently infected cell by penetrating in it and transactivating its LTR promoter. In the cytoplasm, Tat is thought to act as a translational activator of HIV-1 mRNAs. Functionally, extracellular circulating Tat can be endocytosed by surrounding uninfected cells via the binding to several surface receptors such as CD26, CXCR4, heparan sulfate proteoglycans (HSPG) or LDLR. Neurons are rarely infected, but they internalize Tat via their LDLR. Through its interaction with nuclear HATs, Tat is potentially able to control the acetylation-dependent cellular gene expression. Modulates the expression of many cellular genes involved in cell survival, proliferation or in coding for cytokines or cytokine receptors. Tat plays a role in T-cell and neurons apoptosis. Tat induced neurotoxicity and apoptosis probably contribute to neuroAIDS. Circulating Tat also acts as a chemokine-like and/or growth factor-like molecule that binds to specific receptors on the surface of the cells, affecting many cellular pathways. In the vascular system, Tat binds to ITGAV/ITGB3 and ITGA5/ITGB1 integrins dimers at the surface of endothelial cells and competes with bFGF for heparin-binding sites, leading to an excess of soluble bFGF. This chain is Protein Tat, found in Human immunodeficiency virus type 1 group M subtype C (isolate ETH2220) (HIV-1).